An 813-amino-acid chain; its full sequence is MFGTPSRRTFLTASALSAMALAASPTVTDAIAAPGPDSWSALCERWIDIITGRRAARTSDPRARAIIAKTDRKVAEILTDLVSGSSRQTVLISADLRKEQSPFITKTARAIESMACAWATPGSSYHKDPEILSACIEGLRDFCRLRYNPSQDEYGNWWDWEDGASRAVADVMCILHDVLPPEVMSAAAAGIDHFIPDPWFQQPASVKPTANPVQPVVSTGANRMDLTRAVMCRSIATGDEKRLRHAVDGLPDAWRVTTEGDGFRADGGFIQHSHIPYTGGYGDVLFSGLAMLFPLVSGMRFDIVESARKAFHDQVERGFIPVMYNGQILDDVRGRSISRINESAAMHGISIARAMLMMADALPTHRAEQWRGIVHGWMARNTFDHLSEPSTLVDISLFDAAAKARPVPESSTPSYFASMDRLVHRTADWLITVSNCSDRIAWYEYGNGENEWASRTSQGMRYLLLPGDMGQYEDGYWATVDYSAPTGTTVDSTPLKRAVGASWAAKTPTNEWSGGLASGSWSAAASHITSQDSALKARRLWVGLKDAMVELTTDVTTDASRAITVVEHRKVASSSTKLLVDGNRVSSATSFQNPRWAHLDGVGGYVFATDTDLSADVATRKGTWIDVNPSRKVKGADEVIERAYASLHVTHHDRPVAWALLPTASRSHTMALATRPGVEPFTVLRNDATVQAVRSAGALLTKDPTVVTTLAFWKPATCGGVAVNRPALVQTRESANQMEVVIVEPTQKRGSLTVTIEGSWKVKTADSHVDVSCENAAGTLHVDTAGLGGQSVRVTLARQVTQTPSGGGRHDRA.

The tat-type signal signal peptide spans 1 to 32 (MFGTPSRRTFLTASALSAMALAASPTVTDAIA). Active-site residues include N222, H272, and Y281.

It belongs to the polysaccharide lyase 8 family. In terms of processing, predicted to be exported by the Tat system. The position of the signal peptide cleavage has not been experimentally proven.

The protein resides in the secreted. It carries out the reaction [hyaluronan](n) = n 3-(4-deoxy-beta-D-gluc-4-enuronosyl)-N-acetyl-D-glucosamine + H2O. Degrades hyaluronic acid (HA) exclusively into HA disaccharides (HA-2). Produced HA-2s confer anti-inflammatory properties leading to reduced immunopathology in the mouse model of acne. The chain is Hyaluronate lyase HylB from Cutibacterium acnes (strain DSM 16379 / KPA171202) (Propionibacterium acnes).